The chain runs to 223 residues: Triosephosphate isomerase (223 aa).

Asn-6 to Lys-8 is a substrate binding site. Residue His-86 is the Electrophile of the active site. Glu-151 (proton acceptor) is an active-site residue. Gly-157 and Ser-187 together coordinate substrate.

The protein belongs to the triosephosphate isomerase family. In terms of assembly, homodimer.

It localises to the cytoplasm. The catalysed reaction is D-glyceraldehyde 3-phosphate = dihydroxyacetone phosphate. The protein operates within carbohydrate biosynthesis; gluconeogenesis. It functions in the pathway carbohydrate degradation; glycolysis; D-glyceraldehyde 3-phosphate from glycerone phosphate: step 1/1. In terms of biological role, involved in the gluconeogenesis. Catalyzes stereospecifically the conversion of dihydroxyacetone phosphate (DHAP) to D-glyceraldehyde-3-phosphate (G3P). The polypeptide is Triosephosphate isomerase (Campylobacter jejuni subsp. jejuni serotype O:2 (strain ATCC 700819 / NCTC 11168)).